We begin with the raw amino-acid sequence, 171 residues long: Large ribosomal subunit protein uL22 (171 aa).

This sequence belongs to the universal ribosomal protein uL22 family.

This is Large ribosomal subunit protein uL22 (RPL17) from Zea mays (Maize).